The primary structure comprises 466 residues: GTPase Der (466 aa).

EngA-type G domains follow at residues Pro30–Ser193 and Arg203–Asp376. GTP contacts are provided by residues Gly36 to Ser43, Asp83 to Trp87, Asn145 to Asp148, Gly209 to Ser216, Asp256 to Leu260, and Asn321 to Asp324. The 83-residue stretch at Thr377–Glu459 folds into the KH-like domain.

It belongs to the TRAFAC class TrmE-Era-EngA-EngB-Septin-like GTPase superfamily. EngA (Der) GTPase family. As to quaternary structure, associates with the 50S ribosomal subunit.

Functionally, GTPase that plays an essential role in the late steps of ribosome biogenesis. The chain is GTPase Der from Mycobacterium avium (strain 104).